A 637-amino-acid chain; its full sequence is Biosynthetic arginine decarboxylase (637 aa).

Lysine 101 is subject to N6-(pyridoxal phosphate)lysine. Residue 286 to 296 (FDVGGGLAVDY) coordinates substrate.

The protein belongs to the Orn/Lys/Arg decarboxylase class-II family. SpeA subfamily. The cofactor is Mg(2+). Pyridoxal 5'-phosphate serves as cofactor.

The catalysed reaction is L-arginine + H(+) = agmatine + CO2. The protein operates within amine and polyamine biosynthesis; agmatine biosynthesis; agmatine from L-arginine: step 1/1. Catalyzes the biosynthesis of agmatine from arginine. This Shewanella loihica (strain ATCC BAA-1088 / PV-4) protein is Biosynthetic arginine decarboxylase.